The chain runs to 84 residues: Small ribosomal subunit protein bS20 (84 aa).

Belongs to the bacterial ribosomal protein bS20 family.

Its function is as follows. Binds directly to 16S ribosomal RNA. The sequence is that of Small ribosomal subunit protein bS20 from Bacteroides thetaiotaomicron (strain ATCC 29148 / DSM 2079 / JCM 5827 / CCUG 10774 / NCTC 10582 / VPI-5482 / E50).